Here is a 302-residue protein sequence, read N- to C-terminus: Sulfate adenylyltransferase subunit 2 (302 aa).

The protein belongs to the PAPS reductase family. CysD subfamily. As to quaternary structure, heterodimer composed of CysD, the smaller subunit, and CysN.

The catalysed reaction is sulfate + ATP + H(+) = adenosine 5'-phosphosulfate + diphosphate. Its pathway is sulfur metabolism; hydrogen sulfide biosynthesis; sulfite from sulfate: step 1/3. Its function is as follows. With CysN forms the ATP sulfurylase (ATPS) that catalyzes the adenylation of sulfate producing adenosine 5'-phosphosulfate (APS) and diphosphate, the first enzymatic step in sulfur assimilation pathway. APS synthesis involves the formation of a high-energy phosphoric-sulfuric acid anhydride bond driven by GTP hydrolysis by CysN coupled to ATP hydrolysis by CysD. The sequence is that of Sulfate adenylyltransferase subunit 2 from Xanthomonas oryzae pv. oryzae (strain MAFF 311018).